The primary structure comprises 413 residues: MKKYKILLVIGDGLGDRQVASLNGRTPLENADKPTIASLLRSSLVGLMDPIGPGIVPGSDTSHLAIFGLDPKKYYKGRGSFEALGAGAILTEGDIAFRGNFATVDSNLVVIDRRAGRKIEEAEDLVKELNDKIQEIDGVKVRFYHGTEHRVSVVLSGDNLSDKVSDTDPHEVGKRILNSEPTDDALSSKRTANIINALTRRIYEVLSNSQLNDKRVREGLPPANIVLLRGASIHTELPKLKDYTGLSGAAVSATALIKGVCKSLGMEVVTPPGATGGIDTDYMAKAEAAAKLLEDHDLVFLHIKATDAASHDGKVSEKVKAIEMIDRSIGRVLDRYGSELVVLFTGDHATPVELREHSGDPVPLMLYVPTNIIPDNVGDFNERQARKGSLKITGLNIIDLLLNFSNRATKYGA.

It belongs to the BPG-independent phosphoglycerate mutase family. A-PGAM subfamily.

The catalysed reaction is (2R)-2-phosphoglycerate = (2R)-3-phosphoglycerate. The protein operates within carbohydrate degradation; glycolysis; pyruvate from D-glyceraldehyde 3-phosphate: step 3/5. Its function is as follows. Catalyzes the interconversion of 2-phosphoglycerate and 3-phosphoglycerate. The sequence is that of 2,3-bisphosphoglycerate-independent phosphoglycerate mutase from Metallosphaera sedula (strain ATCC 51363 / DSM 5348 / JCM 9185 / NBRC 15509 / TH2).